The following is a 489-amino-acid chain: Cytochrome P450 monooxygenase AMT3 (489 aa).

The helical transmembrane segment at leucine 292–leucine 312 threads the bilayer. Residue cysteine 436 coordinates heme.

This sequence belongs to the cytochrome P450 family. Requires heme as cofactor.

The protein localises to the membrane. Its pathway is mycotoxin biosynthesis. Functionally, cytochrome P450 monooxygenase; part of the gene clusters that mediate the biosynthesis of AM-toxins, host-selective toxins (HSTs) causing Alternaria blotch on apple, a worldwide distributed disease. AM-toxins are cyclic depsipeptides containing the 3 residues 2-hydroxy-isovaleric acid (2-HIV), dehydroalanine, L-alanine which are common for all 3 AM-toxins I to III. The fourth precursor is L-alpha-amino-methoxyphenyl-valeric acid (L-Amv) for AM-toxin I, L-alpha-amino-phenyl-valeric acid (L-Apv) for AM-toxin II, and L-alpha-amino-hydroxyphenyl-valeric acid (L-Ahv) for AM-toxin III. AM-toxins have two target sites for affecting susceptible apple cells; they cause invagination of the plasma membrane and electrolyte loss and chloroplast disorganization. The non-ribosomal peptide synthetase AMT1 contains 4 catalytic modules and is responsible for activation of each residue in AM-toxin. The aldo-keto reductase AMT2 catalyzes the conversion of 2-keto-isovaleric acid (2-KIV) to 2-hydroxy-isovaleric acid (2-HIV), one of the precursor residues incorporated by AMT1 during AM-toxin biosynthesis, by reduction of its ketone to an alcohol. The cytochrome P450 monooxygenase AMT3 and the thioesterase AMT4 are also important for AM-toxin production, but their exact function within the AM-toxin biosynthesis are not known yet. Up to 21 proteins (including AMT1 to AMT4) are predicted to be involved in AM-toxin biosynthesis since their expression ishighly up-regulated in AM-toxin-producing cultures. The protein is Cytochrome P450 monooxygenase AMT3 of Alternaria alternata (Alternaria rot fungus).